The primary structure comprises 267 residues: Sulfur carrier protein FdhD (267 aa).

The Cysteine persulfide intermediate role is filled by C108.

The protein belongs to the FdhD family.

It localises to the cytoplasm. Functionally, required for formate dehydrogenase (FDH) activity. Acts as a sulfur carrier protein that transfers sulfur from IscS to the molybdenum cofactor prior to its insertion into FDH. This Shouchella clausii (strain KSM-K16) (Alkalihalobacillus clausii) protein is Sulfur carrier protein FdhD.